Reading from the N-terminus, the 424-residue chain is Na(+)/H(+) antiporter NhaA (424 aa).

Transmembrane regions (helical) follow at residues Ile-23–Leu-43, Val-65–Ile-85, Leu-102–Val-122, Gly-131–Gly-151, Leu-160–Phe-180, Ala-183–Cys-203, Leu-211–His-231, Ala-265–Val-285, Ile-303–Val-323, Ala-341–Phe-361, and Ile-373–Ala-393.

It belongs to the NhaA Na(+)/H(+) (TC 2.A.33) antiporter family.

It localises to the cell inner membrane. The catalysed reaction is Na(+)(in) + 2 H(+)(out) = Na(+)(out) + 2 H(+)(in). Na(+)/H(+) antiporter that extrudes sodium in exchange for external protons. The polypeptide is Na(+)/H(+) antiporter NhaA (Sphingopyxis alaskensis (strain DSM 13593 / LMG 18877 / RB2256) (Sphingomonas alaskensis)).